Reading from the N-terminus, the 622-residue chain is Low affinity potassium transport system protein Kup (622 aa).

The next 12 membrane-spanning stretches (helical) occupy residues 9–29, 49–69, 103–123, 137–157, 165–185, 213–233, 247–267, 276–296, 337–357, 363–383, 396–416, and 419–439; these read LPAI…TSPL, VFGF…IKYL, VIMG…TPAI, PQLD…LFMI, VGKL…VLGL, VSFI…ALYA, WFTV…ALLL, PFFL…AALA, IYIP…IVSF, LAAA…ILST, LVAL…SANL, and LLSG…IMTT.

It belongs to the HAK/KUP transporter (TC 2.A.72) family.

It is found in the cell inner membrane. It carries out the reaction K(+)(in) + H(+)(in) = K(+)(out) + H(+)(out). In terms of biological role, responsible for the low-affinity transport of potassium into the cell. Likely operates as a K(+):H(+) symporter. The protein is Low affinity potassium transport system protein Kup of Salmonella arizonae (strain ATCC BAA-731 / CDC346-86 / RSK2980).